Reading from the N-terminus, the 211-residue chain is Glycerol-3-phosphate acyltransferase (211 aa).

5 helical membrane passes run 5 to 25 (VILG…TGYL), 55 to 75 (GPGL…ILVA), 85 to 105 (PVPA…AVLA), 126 to 146 (VLLA…LVVL), and 168 to 188 (WFFT…AFVI).

It belongs to the PlsY family. As to quaternary structure, probably interacts with PlsX.

It is found in the cell inner membrane. The catalysed reaction is an acyl phosphate + sn-glycerol 3-phosphate = a 1-acyl-sn-glycero-3-phosphate + phosphate. It functions in the pathway lipid metabolism; phospholipid metabolism. In terms of biological role, catalyzes the transfer of an acyl group from acyl-phosphate (acyl-PO(4)) to glycerol-3-phosphate (G3P) to form lysophosphatidic acid (LPA). This enzyme utilizes acyl-phosphate as fatty acyl donor, but not acyl-CoA or acyl-ACP. In Thermosynechococcus vestitus (strain NIES-2133 / IAM M-273 / BP-1), this protein is Glycerol-3-phosphate acyltransferase.